Consider the following 336-residue polypeptide: Palmitoyltransferase PFA3 (336 aa).

Residues 1–6 (MNDRLS) lie on the Cytoplasmic side of the membrane. Residues 7-29 (LTSLFPRCLTTCLYIWTAYITLT) form a helical membrane-spanning segment. At 30–37 (RIHQIPRW) the chain is on the vacuolar side. The helical transmembrane segment at 38–58 (FLALTIVPTLAVALYTYYKVI) threads the bilayer. The Cytoplasmic portion of the chain corresponds to 59–147 (ARGPGSPLDF…AECTGFRNQK (89 aa)). Positions 104 to 154 (RVCQVCHVWKPDRCHHCSSCDVCILKMDHHCPWFAECTGFRNQKFFIQFLM) constitute a DHHC domain. Residues 148–168 (FFIQFLMYTTLYAFLVLIYTC) traverse the membrane as a helical segment. At 169–188 (YELGTWFNSGSFNRELIDFH) the chain is on the vacuolar side. The chain crosses the membrane as a helical span at residues 189–209 (LLGVALLAVAVFISVLAFTCF). Residues 210-336 (SIYQVCKNQT…RASVEIIDAN (127 aa)) lie on the Cytoplasmic side of the membrane.

The protein belongs to the DHHC palmitoyltransferase family. PFA3 subfamily. Post-translationally, autopalmitoylated.

The protein resides in the vacuole membrane. It catalyses the reaction L-cysteinyl-[protein] + hexadecanoyl-CoA = S-hexadecanoyl-L-cysteinyl-[protein] + CoA. Functionally, palmitoyltransferase specific for VAC8. Palmitoylates VAC8 at one or more of its N-terminal cysteine residues, which is required for its proper membrane localization. The polypeptide is Palmitoyltransferase PFA3 (PFA3) (Saccharomyces cerevisiae (strain ATCC 204508 / S288c) (Baker's yeast)).